A 271-amino-acid chain; its full sequence is MDLINTSRLHETNKQFKNKNEATKLHWRTFFNNFGPFTSIIFSMLMYLIFSKNDFNGTPFLRFVGVLFPSLYSSMEYFLLLFDSWRSDHRVLLSLHGVLYLLLNTILFMFSFVTIISTIAFTASKWNDNDDPATFTMAIPSFFVSFAYLLSISCDFSAKSVLSIGMSTNVPIDLLILLIPIIGTILLIEKSRYHFYFFIVPAILIPVRSLKERYFVSGKSSLSVAPWRTMVFVFMLILGVFVYAFLAYGSVEILYQYLCSFNKPPSQLGNE.

The protein belongs to the UPF0328 family.

The polypeptide is UPF0328 protein ECU09_0020 (Encephalitozoon cuniculi (strain GB-M1) (Microsporidian parasite)).